Here is a 249-residue protein sequence, read N- to C-terminus: Triosephosphate isomerase (249 aa).

A substrate-binding site is contributed by 9–11 (NWK). H95 functions as the Electrophile in the catalytic mechanism. E165 acts as the Proton acceptor in catalysis. Substrate contacts are provided by residues G171, S211, and 232–233 (GG).

It belongs to the triosephosphate isomerase family. In terms of assembly, homodimer.

The protein resides in the cytoplasm. It carries out the reaction D-glyceraldehyde 3-phosphate = dihydroxyacetone phosphate. Its pathway is carbohydrate biosynthesis; gluconeogenesis. It functions in the pathway carbohydrate degradation; glycolysis; D-glyceraldehyde 3-phosphate from glycerone phosphate: step 1/1. In terms of biological role, involved in the gluconeogenesis. Catalyzes stereospecifically the conversion of dihydroxyacetone phosphate (DHAP) to D-glyceraldehyde-3-phosphate (G3P). The sequence is that of Triosephosphate isomerase from Chlorobium phaeobacteroides (strain DSM 266 / SMG 266 / 2430).